We begin with the raw amino-acid sequence, 80 residues long: RNA-binding protein Hfq (80 aa).

Residues 9–69 (DVFLNQVRKE…VSTISPNSPV (61 aa)) form the Sm domain.

It belongs to the Hfq family. In terms of assembly, homohexamer.

Functionally, RNA chaperone that binds small regulatory RNA (sRNAs) and mRNAs to facilitate mRNA translational regulation in response to envelope stress, environmental stress and changes in metabolite concentrations. Also binds with high specificity to tRNAs. This is RNA-binding protein Hfq from Alkaliphilus oremlandii (strain OhILAs) (Clostridium oremlandii (strain OhILAs)).